A 226-amino-acid chain; its full sequence is Protein pdh1 (226 aa).

The signal sequence occupies residues 1 to 26; sequence MNHFSKFSVTKRLLILEVLFSAISFG. Over 27 to 41 the chain is Extracellular; sequence ISIYIKVFGRSSIVT. Residues 42–62 traverse the membrane as a helical segment; that stretch reads FFLLCFHLVPNALFLFPWTII. The Cytoplasmic segment spans residues 63-65; it reads TTS. The helical transmembrane segment at 66–86 threads the bilayer; the sequence is FVDANVFTLLSSILILSVYGV. Residues 87–97 lie on the Extracellular side of the membrane; sequence EIERSWGHKEY. A helical membrane pass occupies residues 98 to 118; the sequence is LLFCQFLTVIPNIAVLIPCFI. The Cytoplasmic portion of the chain corresponds to 119-191; that stretch reads AYKITDSHYL…VFQSFPWTYF (73 aa). A helical membrane pass occupies residues 192–212; the sequence is CLAVSGTCISELYVLFVHPVV. The Extracellular segment spans residues 213 to 226; that stretch reads QELFHLESHTQLPI.

Its subcellular location is the membrane. This chain is Protein pdh1 (pdh1), found in Schizosaccharomyces pombe (strain 972 / ATCC 24843) (Fission yeast).